A 384-amino-acid polypeptide reads, in one-letter code: 8-amino-7-oxononanoate synthase (384 aa).

Arg-21 serves as a coordination point for substrate. Pyridoxal 5'-phosphate is bound at residue 108–109 (GF). Residue His-133 participates in substrate binding. 3 residues coordinate pyridoxal 5'-phosphate: Ser-179, His-207, and Thr-233. Residue Lys-236 is modified to N6-(pyridoxal phosphate)lysine. Thr-352 is a substrate binding site.

This sequence belongs to the class-II pyridoxal-phosphate-dependent aminotransferase family. BioF subfamily. Homodimer. Pyridoxal 5'-phosphate is required as a cofactor.

The catalysed reaction is 6-carboxyhexanoyl-[ACP] + L-alanine + H(+) = (8S)-8-amino-7-oxononanoate + holo-[ACP] + CO2. It functions in the pathway cofactor biosynthesis; biotin biosynthesis. In terms of biological role, catalyzes the decarboxylative condensation of pimeloyl-[acyl-carrier protein] and L-alanine to produce 8-amino-7-oxononanoate (AON), [acyl-carrier protein], and carbon dioxide. This Escherichia coli O8 (strain IAI1) protein is 8-amino-7-oxononanoate synthase.